Consider the following 509-residue polypeptide: Maturase K (509 aa).

It belongs to the intron maturase 2 family. MatK subfamily.

Its subcellular location is the plastid. It is found in the chloroplast. Its function is as follows. Usually encoded in the trnK tRNA gene intron. Probably assists in splicing its own and other chloroplast group II introns. The sequence is that of Maturase K from Vatairea macrocarpa.